Consider the following 462-residue polypeptide: tRNA wybutosine-synthesizing protein 2 (462 aa).

S-adenosyl-L-methionine contacts are provided by residues Ser257, Lys264, and 305–306 (EL).

It belongs to the class I-like SAM-binding methyltransferase superfamily. TRM5/TYW2 family.

It localises to the cytoplasm. It catalyses the reaction 4-demethylwyosine(37) in tRNA(Phe) + S-adenosyl-L-methionine = 4-demethyl-7-[(3S)-3-amino-3-carboxypropyl]wyosine(37) in tRNA(Phe) + S-methyl-5'-thioadenosine + H(+). It participates in tRNA modification; wybutosine-tRNA(Phe) biosynthesis. S-adenosyl-L-methionine-dependent transferase that acts as a component of the wybutosine biosynthesis pathway. Wybutosine is a hyper modified guanosine with a tricyclic base found at the 3'-position adjacent to the anticodon of eukaryotic phenylalanine tRNA. Catalyzes the transfer of the alpha-amino-alpha-carboxypropyl (acp) group from S-adenosyl-L-methionine to the C-7 position of 4-demethylwyosine (imG-14) to produce wybutosine-86. The protein is tRNA wybutosine-synthesizing protein 2 (TRM12) of Saccharomyces cerevisiae (strain ATCC 204508 / S288c) (Baker's yeast).